Reading from the N-terminus, the 199-residue chain is Adenylyl-sulfate kinase (199 aa).

A disordered region spans residues 1-21 (MSQSSNITWHDSEVTKSDRQQ). Over residues 10 to 19 (HDSEVTKSDR) the composition is skewed to basic and acidic residues. 34–41 (GLSGSGKS) is a binding site for ATP. Residue S108 is the Phosphoserine intermediate of the active site.

This sequence belongs to the APS kinase family.

It catalyses the reaction adenosine 5'-phosphosulfate + ATP = 3'-phosphoadenylyl sulfate + ADP + H(+). It participates in sulfur metabolism; hydrogen sulfide biosynthesis; sulfite from sulfate: step 2/3. In terms of biological role, catalyzes the synthesis of activated sulfate. The polypeptide is Adenylyl-sulfate kinase (Staphylococcus haemolyticus (strain JCSC1435)).